Here is a 458-residue protein sequence, read N- to C-terminus: Cobyrinate a,c-diamide synthase (458 aa).

One can recognise a GATase cobBQ-type domain in the interval 254 to 445 (KIGVIRDQVF…IHVHFLSDKS (192 aa)). Cys335 (nucleophile) is an active-site residue.

Belongs to the CobB/CbiA family. It depends on Mg(2+) as a cofactor.

The enzyme catalyses cob(II)yrinate + 2 L-glutamine + 2 ATP + 2 H2O = cob(II)yrinate a,c diamide + 2 L-glutamate + 2 ADP + 2 phosphate + 2 H(+). It functions in the pathway cofactor biosynthesis; adenosylcobalamin biosynthesis; cob(II)yrinate a,c-diamide from sirohydrochlorin (anaerobic route): step 10/10. In terms of biological role, catalyzes the ATP-dependent amidation of the two carboxylate groups at positions a and c of cobyrinate, using either L-glutamine or ammonia as the nitrogen source. This is Cobyrinate a,c-diamide synthase from Archaeoglobus fulgidus (strain ATCC 49558 / DSM 4304 / JCM 9628 / NBRC 100126 / VC-16).